The following is a 538-amino-acid chain: Bifunctional purine biosynthesis protein PurH (538 aa).

The 151-residue stretch at 8–158 (IPAPDKVEIK…KNHAYVTILT (151 aa)) folds into the MGS-like domain.

It belongs to the PurH family.

The enzyme catalyses (6R)-10-formyltetrahydrofolate + 5-amino-1-(5-phospho-beta-D-ribosyl)imidazole-4-carboxamide = 5-formamido-1-(5-phospho-D-ribosyl)imidazole-4-carboxamide + (6S)-5,6,7,8-tetrahydrofolate. It carries out the reaction IMP + H2O = 5-formamido-1-(5-phospho-D-ribosyl)imidazole-4-carboxamide. It participates in purine metabolism; IMP biosynthesis via de novo pathway; 5-formamido-1-(5-phospho-D-ribosyl)imidazole-4-carboxamide from 5-amino-1-(5-phospho-D-ribosyl)imidazole-4-carboxamide (10-formyl THF route): step 1/1. The protein operates within purine metabolism; IMP biosynthesis via de novo pathway; IMP from 5-formamido-1-(5-phospho-D-ribosyl)imidazole-4-carboxamide: step 1/1. The polypeptide is Bifunctional purine biosynthesis protein PurH (Rhizobium leguminosarum bv. trifolii (strain WSM2304)).